The chain runs to 194 residues: Holliday junction branch migration complex subunit RuvA (194 aa).

The segment at 1–64 (MIGRLRGILA…EDSVALYGFL (64 aa)) is domain I. The domain II stretch occupies residues 65 to 140 (REGERRLFRD…RAADFSSGAP (76 aa)). The tract at residues 140–144 (PITGQ) is flexible linker. The segment at 145–194 (LGPDAVSEATVALQQLGYKPAEAARMARDAGAEGDEVATVIRKALQAALR) is domain III.

This sequence belongs to the RuvA family. In terms of assembly, homotetramer. Forms an RuvA(8)-RuvB(12)-Holliday junction (HJ) complex. HJ DNA is sandwiched between 2 RuvA tetramers; dsDNA enters through RuvA and exits via RuvB. An RuvB hexamer assembles on each DNA strand where it exits the tetramer. Each RuvB hexamer is contacted by two RuvA subunits (via domain III) on 2 adjacent RuvB subunits; this complex drives branch migration. In the full resolvosome a probable DNA-RuvA(4)-RuvB(12)-RuvC(2) complex forms which resolves the HJ.

It localises to the cytoplasm. The RuvA-RuvB-RuvC complex processes Holliday junction (HJ) DNA during genetic recombination and DNA repair, while the RuvA-RuvB complex plays an important role in the rescue of blocked DNA replication forks via replication fork reversal (RFR). RuvA specifically binds to HJ cruciform DNA, conferring on it an open structure. The RuvB hexamer acts as an ATP-dependent pump, pulling dsDNA into and through the RuvAB complex. HJ branch migration allows RuvC to scan DNA until it finds its consensus sequence, where it cleaves and resolves the cruciform DNA. This Xanthomonas euvesicatoria pv. vesicatoria (strain 85-10) (Xanthomonas campestris pv. vesicatoria) protein is Holliday junction branch migration complex subunit RuvA.